Here is a 248-residue protein sequence, read N- to C-terminus: UPF0736 protein BCAH187_A1335 (248 aa).

It belongs to the UPF0736 family.

This is UPF0736 protein BCAH187_A1335 from Bacillus cereus (strain AH187).